The sequence spans 103 residues: Large ribosomal subunit protein bL21 (103 aa).

The protein belongs to the bacterial ribosomal protein bL21 family. As to quaternary structure, part of the 50S ribosomal subunit. Contacts protein L20.

Functionally, this protein binds to 23S rRNA in the presence of protein L20. The polypeptide is Large ribosomal subunit protein bL21 (Acetivibrio thermocellus (strain ATCC 27405 / DSM 1237 / JCM 9322 / NBRC 103400 / NCIMB 10682 / NRRL B-4536 / VPI 7372) (Clostridium thermocellum)).